A 458-amino-acid chain; its full sequence is SLIT-ROBO Rho GTPase-activating protein 2B (458 aa).

One can recognise an F-BAR domain in the interval 22–324; that stretch reads KEIRAQLTEQ…AVENLDATSD (303 aa). Over residues 181 to 203 the composition is skewed to basic and acidic residues; it reads LKEAEKQEEKQIGKSVKQEDRQT. A disordered region spans residues 181–214; it reads LKEAEKQEEKQIGKSVKQEDRQTPRSPDSTANVR. A coiled-coil region spans residues 362–400; sequence QSELLQRCQQLQSRLSTLKIENEEVKKTMEATLQTIQDI.

In terms of assembly, may interact with SRGAP2; formation of the heterodimer alters SRGAP2 function.

Its function is as follows. May regulate cell migration and differentiation through interaction with and inhibition of SRGAP2. In contrast to SRGAP2C, it is not able to induce long-lasting changes in synaptic density throughout adulthood. The protein is SLIT-ROBO Rho GTPase-activating protein 2B (SRGAP2B) of Homo sapiens (Human).